Here is a 151-residue protein sequence, read N- to C-terminus: SsrA-binding protein (151 aa).

A disordered region spans residues G124–G151. Basic and acidic residues predominate over residues D129 to R141. The span at Q142 to G151 shows a compositional bias: basic residues.

It belongs to the SmpB family.

Its subcellular location is the cytoplasm. Functionally, required for rescue of stalled ribosomes mediated by trans-translation. Binds to transfer-messenger RNA (tmRNA), required for stable association of tmRNA with ribosomes. tmRNA and SmpB together mimic tRNA shape, replacing the anticodon stem-loop with SmpB. tmRNA is encoded by the ssrA gene; the 2 termini fold to resemble tRNA(Ala) and it encodes a 'tag peptide', a short internal open reading frame. During trans-translation Ala-aminoacylated tmRNA acts like a tRNA, entering the A-site of stalled ribosomes, displacing the stalled mRNA. The ribosome then switches to translate the ORF on the tmRNA; the nascent peptide is terminated with the 'tag peptide' encoded by the tmRNA and targeted for degradation. The ribosome is freed to recommence translation, which seems to be the essential function of trans-translation. This is SsrA-binding protein from Rhizobium johnstonii (strain DSM 114642 / LMG 32736 / 3841) (Rhizobium leguminosarum bv. viciae).